The primary structure comprises 431 residues: MKKLFIETLGCAMNVRDSEHMIAELNQKEPYELTQNVEEADLIIINTCSVREKPVAKLFSEIGVFNKYKKPGAKIGVAGCTASHLGKDIIKRAPSVDFVIGARNVSKITEVVDKKHAVEIDTDYDESTYAFGEYRTNPFKAMVNISIGCDKSCTFCIVPATRGDEISIPSDLLVQEITKAVATGAKEVMLLGQNVNNYGRRFGATEEKIDFTGLLQKISKIEGLERIRFTSPHPLHMDDAFIQEFASNPKICKQIHVPLQSGSTSLLKVMKRGYTKENFLGRCEKIRMLCPEATISTDIIVGFPGETEADFEDTMDVLEKVRFEQLFSFKYSPRPHTEAAEFEEQIDNKIAGERLTRLQTRHTEILDEIMDAQLGKVHEVYFDELKSNGRVSGRSDDGKLVFVEGSEELLGKIVDVRIIKTSRGALDGVLV.

One can recognise an MTTase N-terminal domain in the interval 2–117 (KKLFIETLGC…ITEVVDKKHA (116 aa)). 6 residues coordinate [4Fe-4S] cluster: Cys-11, Cys-48, Cys-80, Cys-149, Cys-153, and Cys-156. The region spanning 135–368 (RTNPFKAMVN…QTRHTEILDE (234 aa)) is the Radical SAM core domain. Residues 371-431 (DAQLGKVHEV…SRGALDGVLV (61 aa)) enclose the TRAM domain.

The protein belongs to the methylthiotransferase family. MiaB subfamily. As to quaternary structure, monomer. [4Fe-4S] cluster is required as a cofactor.

It is found in the cytoplasm. It carries out the reaction N(6)-dimethylallyladenosine(37) in tRNA + (sulfur carrier)-SH + AH2 + 2 S-adenosyl-L-methionine = 2-methylsulfanyl-N(6)-dimethylallyladenosine(37) in tRNA + (sulfur carrier)-H + 5'-deoxyadenosine + L-methionine + A + S-adenosyl-L-homocysteine + 2 H(+). Functionally, catalyzes the methylthiolation of N6-(dimethylallyl)adenosine (i(6)A), leading to the formation of 2-methylthio-N6-(dimethylallyl)adenosine (ms(2)i(6)A) at position 37 in tRNAs that read codons beginning with uridine. The chain is tRNA-2-methylthio-N(6)-dimethylallyladenosine synthase from Sulfurovum sp. (strain NBC37-1).